The sequence spans 143 residues: Large-conductance mechanosensitive channel (143 aa).

Transmembrane regions (helical) follow at residues 10–30 (FAVKGNVMDLAVGVIIGGAFS) and 89–109 (GSFITVAINFVILAFIIFLMV).

This sequence belongs to the MscL family. In terms of assembly, homopentamer.

The protein resides in the cell inner membrane. In terms of biological role, channel that opens in response to stretch forces in the membrane lipid bilayer. May participate in the regulation of osmotic pressure changes within the cell. This is Large-conductance mechanosensitive channel from Burkholderia vietnamiensis (strain G4 / LMG 22486) (Burkholderia cepacia (strain R1808)).